We begin with the raw amino-acid sequence, 493 residues long: Guanosine-5'-triphosphate,3'-diphosphate pyrophosphatase (493 aa).

This sequence belongs to the GppA/Ppx family. GppA subfamily.

The enzyme catalyses guanosine 3'-diphosphate 5'-triphosphate + H2O = guanosine 3',5'-bis(diphosphate) + phosphate + H(+). It functions in the pathway purine metabolism; ppGpp biosynthesis; ppGpp from GTP: step 2/2. In terms of biological role, catalyzes the conversion of pppGpp to ppGpp. Guanosine pentaphosphate (pppGpp) is a cytoplasmic signaling molecule which together with ppGpp controls the 'stringent response', an adaptive process that allows bacteria to respond to amino acid starvation, resulting in the coordinated regulation of numerous cellular activities. This chain is Guanosine-5'-triphosphate,3'-diphosphate pyrophosphatase, found in Salmonella heidelberg (strain SL476).